Here is a 666-residue protein sequence, read N- to C-terminus: Amyloid beta A4 precursor protein-binding family B member 1-interacting protein (666 aa).

Serine 55 is modified (phosphoserine). The tract at residues serine 122–glutamate 155 is disordered. Positions proline 129–proline 148 are enriched in pro residues. A Ras-associating domain is found at lysine 176–lysine 263. Residues valine 310–tyrosine 419 enclose the PH domain. Residues alanine 448–serine 666 form a disordered region. Residues glutamine 453–alanine 478 show a composition bias toward polar residues. Residues alanine 483 to alanine 504 are compositionally biased toward basic and acidic residues. A Phosphoserine modification is found at serine 526. Position 528 is a phosphothreonine (threonine 528). Phosphoserine is present on serine 531. Pro residues-rich tracts occupy residues proline 547–serine 589 and leucine 598–proline 631.

It belongs to the MRL family. As to quaternary structure, interacts, through the N-terminal Pro-rich region, with the WW domain of APBB1. Interacts with RAP1A, PFN1, TLN1, VASP, VCL and ENAH. As to expression, widely expressed with high expression in thymus, spleen, lymph node, bone marrow and peripheral leukocytes.

It localises to the cell membrane. The protein localises to the cell projection. It is found in the lamellipodium. The protein resides in the cell junction. Its subcellular location is the focal adhesion. It localises to the cytoplasm. The protein localises to the cytoskeleton. Functionally, appears to function in the signal transduction from Ras activation to actin cytoskeletal remodeling. Suppresses insulin-induced promoter activities through AP1 and SRE. Mediates Rap1-induced adhesion. The chain is Amyloid beta A4 precursor protein-binding family B member 1-interacting protein (APBB1IP) from Homo sapiens (Human).